The primary structure comprises 282 residues: MAITAAQVKELRERTGAGMMDCKKALTETNGDIELAIENMRKSGAAKAAKKAGNIAAEGTILIKQGEGFSVLLEVNCQTDFVAKDSNFLAFANEVLDVAAAGKVSIADLQAQFEETRVALVAKIGENINVRRVEYIDGASQASYRHGDRIGVVVTGEADEETLKHVAMHVAASKPEYVNPSDVPAEVVEKEKAVQIEIAMNEGKPQEIAEKMVAGRMKKFTGEVSLTGQAFIMEPKKTVGEILKEKGATVTNFIRLEVGEGIEKKEEDFAAEVAAQIAASKA.

Residues 79–82 (TDFV) form an involved in Mg(2+) ion dislocation from EF-Tu region.

It belongs to the EF-Ts family.

It is found in the cytoplasm. Functionally, associates with the EF-Tu.GDP complex and induces the exchange of GDP to GTP. It remains bound to the aminoacyl-tRNA.EF-Tu.GTP complex up to the GTP hydrolysis stage on the ribosome. The sequence is that of Elongation factor Ts from Shewanella loihica (strain ATCC BAA-1088 / PV-4).